We begin with the raw amino-acid sequence, 447 residues long: Elongation factor 1-alpha (447 aa).

The region spanning 5-230 (KVHINIVVIG…DNINEPKRPS (226 aa)) is the tr-type G domain. The G1 stretch occupies residues 14-21 (GHVDSGKS). 14–21 (GHVDSGKS) serves as a coordination point for GTP. Position 55 is an N6,N6-dimethyllysine (K55). Positions 70–74 (GITID) are G2. K79 carries the N6,N6,N6-trimethyllysine modification. Positions 91–94 (DAPG) are G3. GTP-binding positions include 91–95 (DAPGH) and 153–156 (NKMD). The tract at residues 153–156 (NKMD) is G4. At K187 the chain carries N6,N6,N6-trimethyllysine. The tract at residues 194-196 (SGF) is G5. The residue at position 261 (K261) is an N6-methyllysine. 5-glutamyl glycerylphosphorylethanolamine is present on E289. N6,N6,N6-trimethyllysine is present on K306. E362 carries the post-translational modification 5-glutamyl glycerylphosphorylethanolamine. K396 carries the post-translational modification N6,N6,N6-trimethyllysine.

This sequence belongs to the TRAFAC class translation factor GTPase superfamily. Classic translation factor GTPase family. EF-Tu/EF-1A subfamily.

It is found in the cytoplasm. This protein promotes the GTP-dependent binding of aminoacyl-tRNA to the A-site of ribosomes during protein biosynthesis. This is Elongation factor 1-alpha from Vicia faba (Broad bean).